We begin with the raw amino-acid sequence, 566 residues long: Arginine--tRNA ligase (566 aa).

A 'HIGH' region motif is present at residues 120 to 130; sequence PNIAKPFHVGH.

Belongs to the class-I aminoacyl-tRNA synthetase family. Monomer.

The protein resides in the cytoplasm. The enzyme catalyses tRNA(Arg) + L-arginine + ATP = L-arginyl-tRNA(Arg) + AMP + diphosphate. This Clostridium kluyveri (strain NBRC 12016) protein is Arginine--tRNA ligase.